Reading from the N-terminus, the 363-residue chain is Type 3 secretion system translocon protein SctB (363 aa).

A helical transmembrane segment spans residues 99-120 (ISSLSSNAVSLIISVAVLLSAL).

The protein belongs to the SctB/SipC family. As to quaternary structure, the core secretion machinery of the T3SS is composed of approximately 20 different proteins, including cytoplasmic components, a base, an export apparatus and a needle. This subunit is involved in the formation of a pore, called the translocon, in host membrane.

The protein resides in the secreted. The protein localises to the host membrane. Functionally, component of the type III secretion system (T3SS), also called injectisome, which is used to inject bacterial effector proteins into eukaryotic host cells. IpaB/SctE and IpaC/SctB are inserted into the host membrane where they form a pore and allow the translocation of effector proteins into the cytosol of target cells. The protein is Type 3 secretion system translocon protein SctB of Shigella dysenteriae.